The chain runs to 255 residues: Cathepsin G (255 aa).

A signal peptide spans 1-18; sequence MQPLLLLLAFLLPTGAEA. Residues 19-20 constitute a propeptide, activation peptide; sequence GE. Residues 21–25 form an important for antimicrobial activity region; that stretch reads IIGGR. The Peptidase S1 domain occupies 21 to 243; that stretch reads IIGGRESRPH…FLPWIRTTMR (223 aa). Cysteine 49 and cysteine 65 are joined by a disulfide. Histidine 64 (charge relay system) is an active-site residue. N-linked (GlcNAc...) (complex) asparagine; alternate glycosylation occurs at asparagine 71. N-linked (GlcNAc...) (paucimannose) asparagine; alternate glycosylation is present at asparagine 71. The interval 97-111 is important for antimicrobial activity; sequence HPQYNQRTIQNDIML. Aspartate 108 functions as the Charge relay system in the catalytic mechanism. 2 disulfides stabilise this stretch: cysteine 142/cysteine 207 and cysteine 172/cysteine 186. Serine 201 functions as the Charge relay system in the catalytic mechanism. A propeptide spanning residues 245-255 is cleaved from the precursor; the sequence is FKLLDQMETPL.

This sequence belongs to the peptidase S1 family. As to quaternary structure, (Microbial infection) Interacts with CASP4; the interaction is promoted by the Td92 surface protein of the periodontal pathogen T.denticola and leads to CASP4 activation. In terms of assembly, (Microbial infection) Interacts with M.tuberculosis protein Rv3364c. (Microbial infection) Interacts with S.aureus EapH1; EapH1 acts as a reversible inhibitor of CATG activity. Post-translationally, two C-terminal truncation variants have been identified, one which ends at Arg-243 and one which ends at Ser-244. Expressed in neutrophils (at protein level). Expressed in B cells.

It localises to the cell membrane. The protein resides in the cytoplasmic granule. The protein localises to the secreted. It is found in the cytoplasm. Its subcellular location is the cytosol. It localises to the lysosome. The protein resides in the nucleus. The enzyme catalyses Specificity similar to chymotrypsin C.. With respect to regulation, inhibited by soybean trypsin inhibitor, benzamidine, the synthetic peptide R13K, Z-Gly-Leu-Phe-CH2Cl, phenylmethylsulfonyl fluoride, 3,4-dichloroisocoumarin, DFP, SBTI and alpha-1-antitrypsin. Inhibited by LPS from P.aeruginosa but not by LPS from S.minnesota. Not inhibited by elastinal, CMK, TLCK, ETDA or leupeptin. (Microbial infection) Inhibited reversibly by S.aureus EapH1. Its activity is regulated as follows. (Microbial infection) Activity is induced by the Td92 surface protein of the periodontal pathogen T.denticola. In terms of biological role, serine protease with trypsin- and chymotrypsin-like specificity. Also displays antibacterial activity against Gram-negative and Gram-positive bacteria independent of its protease activity. Prefers Phe and Tyr residues in the P1 position of substrates but also cleaves efficiently after Trp and Leu. Shows a preference for negatively charged amino acids in the P2' position and for aliphatic amino acids both upstream and downstream of the cleavage site. Required for recruitment and activation of platelets which is mediated by the F2RL3/PAR4 platelet receptor. Binds reversibly to and stimulates B cells and CD4(+) and CD8(+) T cells. Also binds reversibly to natural killer (NK) cells and enhances NK cell cytotoxicity through its protease activity. Cleaves complement C3. Cleaves vimentin. Cleaves thrombin receptor F2R/PAR1 and acts as either an agonist or an inhibitor, depending on the F2R cleavage site. Cleavage of F2R at '41-Arg-|-Ser-42' results in receptor activation while cleavage at '55-Phe-|-Trp-56' results in inhibition of receptor activation. Cleaves the synovial mucin-type protein PRG4/lubricin. Cleaves and activates IL36G which promotes expression of chemokines CXCL1 and CXLC8 in keratinocytes. Cleaves IL33 into mature forms which have greater activity than the unprocessed form. Cleaves coagulation factor F8 to produce a partially activated form. Also cleaves and activates coagulation factor F10. Cleaves leukocyte cell surface protein SPN/CD43 to release its extracellular domain and trigger its intramembrane proteolysis by gamma-secretase, releasing the CD43 cytoplasmic tail chain (CD43-ct) which translocates to the nucleus. Cleaves CCL5/RANTES to produce RANTES(4-68) lacking the N-terminal three amino acids which exhibits reduced chemotactic and antiviral activities. During apoptosis, cleaves SMARCA2/BRM to produce a 160 kDa cleavage product which localizes to the cytosol. Cleaves myelin basic protein MBP in B cell lysosomes at '224-Phe-|-Lys-225' and '248-Phe-|-Ser-249', degrading the major immunogenic MBP epitope and preventing the activation of MBP-specific autoreactive T cells. Cleaves annexin ANXA1 and antimicrobial peptide CAMP to produce peptides which act on neutrophil N-formyl peptide receptors to enhance the release of CXCL2. Acts as a ligand for the N-formyl peptide receptor FPR1, enhancing phagocyte chemotaxis. Has antibacterial activity against the Gram-negative bacteria N.gonorrhoeae and P.aeruginosa. Likely to act against N.gonorrhoeae by interacting with N.gonorrhoeae penA/PBP2. Exhibits potent antimicrobial activity against the Gram-positive bacterium L.monocytogenes. Has antibacterial activity against the Gram-positive bacterium S.aureus and degrades S.aureus biofilms, allowing polymorphonuclear leukocytes to penetrate the biofilm and phagocytose bacteria. Has antibacterial activity against M.tuberculosis. Mediates CASP4 activation induced by the Td92 surface protein of the periodontal pathogen T.denticola, causing production and secretion of IL1A and leading to pyroptosis of gingival fibroblasts. Induces platelet aggregation which is strongly potentiated in the presence of ELANE. The chain is Cathepsin G (CTSG) from Homo sapiens (Human).